The following is a 480-amino-acid chain: Probable serine/threonine-protein phosphatase 2A regulatory subunit B'' subunit TON2 (480 aa).

3 EF-hand domains span residues 186 to 221 (VSLT…LIPN), 294 to 329 (TSAQ…TLTE), and 369 to 404 (DTPE…VHQK). 5 residues coordinate Ca(2+): D307, D309, S311, S313, and E318.

In terms of assembly, interacts with PP2AA1. In terms of tissue distribution, widely expressed.

The protein resides in the cytoplasm. The protein localises to the cytoskeleton. In terms of biological role, probable regulatory subunit of type 2A protein phosphatase involved in the control of the dynamic organization of the cortical cytoskeleton. Plays an important role in the organization of interphase microtubule arrays in part through the regulation of nucleation geometry. Required for the reorganization of cortical arrays in response to light. The sequence is that of Probable serine/threonine-protein phosphatase 2A regulatory subunit B'' subunit TON2 (TON2) from Arabidopsis thaliana (Mouse-ear cress).